The primary structure comprises 122 residues: Small ribosomal subunit protein bS6 (122 aa).

Residues 96–122 (ETAPSPMMKAVQKEDAAKSHRTEAPAA) are disordered. Positions 106-122 (VQKEDAAKSHRTEAPAA) are enriched in basic and acidic residues.

It belongs to the bacterial ribosomal protein bS6 family.

Binds together with bS18 to 16S ribosomal RNA. This chain is Small ribosomal subunit protein bS6, found in Herminiimonas arsenicoxydans.